A 546-amino-acid polypeptide reads, in one-letter code: High-affinity glucose transporter ght5 (546 aa).

Residues 1 to 9 (MGKNLTIVM) lie on the Cytoplasmic side of the membrane. The chain crosses the membrane as a helical span at residues 10-30 (LVFVSMAGWMFGADTGSIGGI). Residues 31 to 58 (TNMRDFQSRFADRYNPVTDSYSYSSARQ) lie on the Extracellular side of the membrane. Residues 59–79 (GLITGMVNVGSFFGCFLSSPL) traverse the membrane as a helical segment. At 80 to 87 (MDRIGKRT) the chain is on the cytoplasmic side. Residues 88–108 (SIMFWTIVYLIGIILQVTAVP) form a helical membrane-spanning segment. Topologically, residues 109-112 (SWVQ) are extracellular. Residues 113-133 (IMVAKIWTGLSIGALSVLAPG) traverse the membrane as a helical segment. Residues 134-144 (FQSEVAPADLR) are Cytoplasmic-facing. The chain crosses the membrane as a helical span at residues 145 to 165 (GTIVTTYQLAVTGGIFIAACI). Topologically, residues 166 to 179 (NMGTHKLHKTAQWR) are extracellular. A helical transmembrane segment spans residues 180 to 200 (VSMGINLLWGIITFIGISFLP). Residues 201 to 266 (ESPRYLISVG…IFGPDIRYRT (66 aa)) are Cytoplasmic-facing. The helical transmembrane segment at 267-285 (FLGLGVMSLQQLTGDNYYF) threads the bilayer. The Extracellular portion of the chain corresponds to 286-301 (YYGFEVFEGTGMNSPY). A helical transmembrane segment spans residues 302-322 (LSALILDAVNFGCTFGGLFVL). Residues 323 to 328 (EFFGRR) lie on the Cytoplasmic side of the membrane. The chain crosses the membrane as a helical span at residues 329–349 (MPLIIGALWQSITFFIYAAVG). Residues 350-363 (NRALTRKNGTSNHR) lie on the Extracellular side of the membrane. Asn357 carries an N-linked (GlcNAc...) asparagine glycan. Residues 364–384 (AGAVMIVFSCLFIFSFAQTWG) traverse the membrane as a helical segment. Over 385–404 (PAAYVIVGESYPIRYRSKCA) the chain is Cytoplasmic. A helical membrane pass occupies residues 405–425 (AVATTGNWLWGFLISFFTPFI). Residues 426–432 (TNSIGFK) lie on the Extracellular side of the membrane. The chain crosses the membrane as a helical span at residues 433 to 453 (YGYIFAACNLCAACIIFLFAH). Over 454–546 (ETKGLTLEEI…SYHDQEEQFA (93 aa)) the chain is Cytoplasmic. The interval 486-546 (KQQEEVREKS…SYHDQEEQFA (61 aa)) is disordered. Over residues 487–496 (QQEEVREKSR) the composition is skewed to basic and acidic residues. Over residues 509–519 (VDGEEGIEDSS) the composition is skewed to acidic residues. Over residues 520 to 529 (NDISSTTSSD) the composition is skewed to low complexity. Residues Ser528 and Ser537 each carry the phosphoserine modification. A compositionally biased stretch (basic and acidic residues) spans 530-546 (GRAKPESSYHDQEEQFA).

This sequence belongs to the major facilitator superfamily. Sugar transporter (TC 2.A.1.1) family.

Its subcellular location is the membrane. High-affinity glucose transporter. The protein is High-affinity glucose transporter ght5 (ght5) of Schizosaccharomyces pombe (strain 972 / ATCC 24843) (Fission yeast).